The chain runs to 699 residues: Elongation factor G (699 aa).

The tr-type G domain maps to Glu-8–Thr-289. GTP-binding positions include Ala-17–Thr-24, Asp-88–His-92, and Asn-142–Asp-145.

It belongs to the TRAFAC class translation factor GTPase superfamily. Classic translation factor GTPase family. EF-G/EF-2 subfamily.

It is found in the cytoplasm. Catalyzes the GTP-dependent ribosomal translocation step during translation elongation. During this step, the ribosome changes from the pre-translocational (PRE) to the post-translocational (POST) state as the newly formed A-site-bound peptidyl-tRNA and P-site-bound deacylated tRNA move to the P and E sites, respectively. Catalyzes the coordinated movement of the two tRNA molecules, the mRNA and conformational changes in the ribosome. The chain is Elongation factor G from Variovorax paradoxus (strain S110).